We begin with the raw amino-acid sequence, 578 residues long: Proline--tRNA ligase (578 aa).

This sequence belongs to the class-II aminoacyl-tRNA synthetase family. ProS type 1 subfamily. In terms of assembly, homodimer.

The protein localises to the cytoplasm. It catalyses the reaction tRNA(Pro) + L-proline + ATP = L-prolyl-tRNA(Pro) + AMP + diphosphate. Functionally, catalyzes the attachment of proline to tRNA(Pro) in a two-step reaction: proline is first activated by ATP to form Pro-AMP and then transferred to the acceptor end of tRNA(Pro). As ProRS can inadvertently accommodate and process non-cognate amino acids such as alanine and cysteine, to avoid such errors it has two additional distinct editing activities against alanine. One activity is designated as 'pretransfer' editing and involves the tRNA(Pro)-independent hydrolysis of activated Ala-AMP. The other activity is designated 'posttransfer' editing and involves deacylation of mischarged Ala-tRNA(Pro). The misacylated Cys-tRNA(Pro) is not edited by ProRS. The sequence is that of Proline--tRNA ligase from Syntrophus aciditrophicus (strain SB).